The sequence spans 359 residues: Hyaluronan and proteoglycan link protein 3 (359 aa).

An N-terminal signal peptide occupies residues 1–17 (MSLLFLVLLSPFPCVLG). Positions 48 to 164 (KLVVETTEES…ESGLVELELR (117 aa)) constitute an Ig-like V-type domain. Disulfide bonds link Cys70–Cys146, Cys188–Cys259, Cys212–Cys233, Cys286–Cys355, and Cys311–Cys332. Link domains follow at residues 166–261 (VVFP…FCFA) and 266–357 (GRVY…YCYV).

This sequence belongs to the HAPLN family.

It localises to the secreted. The protein resides in the extracellular space. The protein localises to the extracellular matrix. May function in hyaluronic acid binding. The polypeptide is Hyaluronan and proteoglycan link protein 3 (Hapln3) (Mus musculus (Mouse)).